The primary structure comprises 125 residues: Insulin growth factor-like family member 3 (125 aa).

The N-terminal stretch at 1 to 24 (MRPRCCILALVCWITVFLLQCSKG) is a signal peptide.

The protein belongs to the IGFL family. As to expression, detected in the cerebellum.

Its subcellular location is the secreted. Potential ligand of the IGFLR1 cell membrane receptor. This Homo sapiens (Human) protein is Insulin growth factor-like family member 3 (IGFL3).